The following is a 48-amino-acid chain: Palustrin-3a (48 aa).

A disulfide bridge links cysteine 43 with cysteine 48.

In terms of tissue distribution, expressed by the skin glands.

Its subcellular location is the secreted. Its function is as follows. Antimicrobial activity against Gram-negative bacterium E.coli. This is Palustrin-3a from Lithobates palustris (Pickerel frog).